The primary structure comprises 186 residues: A-type ATP synthase subunit E (186 aa).

It belongs to the V-ATPase E subunit family. In terms of assembly, has multiple subunits with at least A(3), B(3), C, D, E, F, H, I and proteolipid K(x).

The protein resides in the cell membrane. Its function is as follows. Component of the A-type ATP synthase that produces ATP from ADP in the presence of a proton gradient across the membrane. This chain is A-type ATP synthase subunit E, found in Methanocella arvoryzae (strain DSM 22066 / NBRC 105507 / MRE50).